Reading from the N-terminus, the 297-residue chain is Large ribosomal subunit protein uL3 (297 aa).

Disordered regions lie at residues 124-143 (NQKIGPKSHGGGGGSKPVRQ) and 258-297 (MKEKEKLEQEAKQNAEKSNSDDDVRKEAEKLNKNKEDKGE).

The protein belongs to the universal ribosomal protein uL3 family. As to quaternary structure, part of the 50S ribosomal subunit. Forms a cluster with proteins L14 and L19.

One of the primary rRNA binding proteins, it binds directly near the 3'-end of the 23S rRNA, where it nucleates assembly of the 50S subunit. In Mycoplasma mobile (strain ATCC 43663 / 163K / NCTC 11711) (Mesomycoplasma mobile), this protein is Large ribosomal subunit protein uL3.